Consider the following 198-residue polypeptide: MVTTYLLFIVAYLLGSIPFALVVGKIGYGIDIREHGSGNLGGTNTFRTLGKKAGFTVTIADILKGTLATSLPMIFGLDIHPLWFGLAAVLGHVYPIFAKFRGGKAVATSAGVLLCYSPVVFAILAVVFFTLLFTTRYVSLSSMVTAVVAVIASIVSGDKIFIIAMCLLAGMVIYKHRANIGRIINKTEPKANFSKKQK.

The next 4 membrane-spanning stretches (helical) occupy residues 4-24, 71-91, 113-133, and 147-167; these read TYLLFIVAYLLGSIPFALVVG, LPMIFGLDIHPLWFGLAAVLG, LLCYSPVVFAILAVVFFTLLF, and VVAVIASIVSGDKIFIIAMCL.

This sequence belongs to the PlsY family. Probably interacts with PlsX.

It is found in the cell membrane. It carries out the reaction an acyl phosphate + sn-glycerol 3-phosphate = a 1-acyl-sn-glycero-3-phosphate + phosphate. Its pathway is lipid metabolism; phospholipid metabolism. Catalyzes the transfer of an acyl group from acyl-phosphate (acyl-PO(4)) to glycerol-3-phosphate (G3P) to form lysophosphatidic acid (LPA). This enzyme utilizes acyl-phosphate as fatty acyl donor, but not acyl-CoA or acyl-ACP. This Bacillus cereus (strain G9842) protein is Glycerol-3-phosphate acyltransferase.